Reading from the N-terminus, the 353-residue chain is Alanine racemase (353 aa).

K33 (proton acceptor; specific for D-alanine) is an active-site residue. Residue K33 is modified to N6-(pyridoxal phosphate)lysine. A substrate-binding site is contributed by R129. Catalysis depends on Y250, which acts as the Proton acceptor; specific for L-alanine. Residue M298 participates in substrate binding.

Belongs to the alanine racemase family. The cofactor is pyridoxal 5'-phosphate.

It catalyses the reaction L-alanine = D-alanine. It participates in amino-acid biosynthesis; D-alanine biosynthesis; D-alanine from L-alanine: step 1/1. Functionally, catalyzes the interconversion of L-alanine and D-alanine. May also act on other amino acids. The sequence is that of Alanine racemase (alr) from Azoarcus sp. (strain BH72).